Consider the following 300-residue polypeptide: Putative S-adenosyl-L-methionine-dependent methyltransferase MAB_4328c (300 aa).

Residues aspartate 126 and 155 to 156 (DL) contribute to the S-adenosyl-L-methionine site.

Belongs to the UPF0677 family.

Its function is as follows. Exhibits S-adenosyl-L-methionine-dependent methyltransferase activity. This Mycobacteroides abscessus (strain ATCC 19977 / DSM 44196 / CCUG 20993 / CIP 104536 / JCM 13569 / NCTC 13031 / TMC 1543 / L948) (Mycobacterium abscessus) protein is Putative S-adenosyl-L-methionine-dependent methyltransferase MAB_4328c.